Here is a 226-residue protein sequence, read N- to C-terminus: Phosphoribosylformylglycinamidine synthase subunit PurQ (226 aa).

One can recognise a Glutamine amidotransferase type-1 domain in the interval 2 to 225 (RFGIVVFPGS…MHYLEGGKNN (224 aa)). The active-site Nucleophile is Cys-86. Residues His-194 and Glu-196 contribute to the active site.

In terms of assembly, part of the FGAM synthase complex composed of 1 PurL, 1 PurQ and 2 PurS subunits.

It is found in the cytoplasm. It carries out the reaction N(2)-formyl-N(1)-(5-phospho-beta-D-ribosyl)glycinamide + L-glutamine + ATP + H2O = 2-formamido-N(1)-(5-O-phospho-beta-D-ribosyl)acetamidine + L-glutamate + ADP + phosphate + H(+). The catalysed reaction is L-glutamine + H2O = L-glutamate + NH4(+). It participates in purine metabolism; IMP biosynthesis via de novo pathway; 5-amino-1-(5-phospho-D-ribosyl)imidazole from N(2)-formyl-N(1)-(5-phospho-D-ribosyl)glycinamide: step 1/2. Part of the phosphoribosylformylglycinamidine synthase complex involved in the purines biosynthetic pathway. Catalyzes the ATP-dependent conversion of formylglycinamide ribonucleotide (FGAR) and glutamine to yield formylglycinamidine ribonucleotide (FGAM) and glutamate. The FGAM synthase complex is composed of three subunits. PurQ produces an ammonia molecule by converting glutamine to glutamate. PurL transfers the ammonia molecule to FGAR to form FGAM in an ATP-dependent manner. PurS interacts with PurQ and PurL and is thought to assist in the transfer of the ammonia molecule from PurQ to PurL. This Alkaliphilus metalliredigens (strain QYMF) protein is Phosphoribosylformylglycinamidine synthase subunit PurQ.